Consider the following 461-residue polypeptide: ATP synthase subunit beta (461 aa).

151-158 (GGAGVGKT) provides a ligand contact to ATP.

The protein belongs to the ATPase alpha/beta chains family. F-type ATPases have 2 components, CF(1) - the catalytic core - and CF(0) - the membrane proton channel. CF(1) has five subunits: alpha(3), beta(3), gamma(1), delta(1), epsilon(1). CF(0) has three main subunits: a(1), b(2) and c(9-12). The alpha and beta chains form an alternating ring which encloses part of the gamma chain. CF(1) is attached to CF(0) by a central stalk formed by the gamma and epsilon chains, while a peripheral stalk is formed by the delta and b chains.

It is found in the cell inner membrane. The catalysed reaction is ATP + H2O + 4 H(+)(in) = ADP + phosphate + 5 H(+)(out). Produces ATP from ADP in the presence of a proton gradient across the membrane. The catalytic sites are hosted primarily by the beta subunits. The protein is ATP synthase subunit beta of Alteromonas mediterranea (strain DSM 17117 / CIP 110805 / LMG 28347 / Deep ecotype).